The chain runs to 216 residues: Ras-related protein RABA1c (216 aa).

20-27 (GDSGVGKS) provides a ligand contact to GTP. Positions 42–50 (SKSTIGVEF) match the Effector region motif. GTP contacts are provided by residues 68 to 72 (DTAGQ), 126 to 129 (NKSD), and 156 to 157 (SA). Residues C213 and C214 are each lipidated (S-geranylgeranyl cysteine).

The protein belongs to the small GTPase superfamily. Rab family.

Its subcellular location is the cell membrane. Its function is as follows. Intracellular vesicle trafficking and protein transport. This chain is Ras-related protein RABA1c (RABA1C), found in Arabidopsis thaliana (Mouse-ear cress).